The primary structure comprises 815 residues: (-)-kolavenyl diphosphate synthase TPS28, chloroplastic (815 aa).

A chloroplast-targeting transit peptide spans 1 to 51 (MFMSSSSSSHARRPQLSSFSYLHPPLPFPGLSFFNTRDKRVNFDSTRIICI). Substrate is bound at residue K247. D379 and D381 together coordinate Mg(2+). The short motif at 379–382 (DIDD) is the DXDD motif element. Substrate is bound at residue K465.

Belongs to the terpene synthase family. Tpsc subfamily. Mg(2+) serves as cofactor.

It is found in the plastid. Its subcellular location is the chloroplast. It carries out the reaction (2E,6E,10E)-geranylgeranyl diphosphate = (-)-kolavenyl diphosphate. Its activity is regulated as follows. Inhibited by high concentrations of magnesium. In terms of biological role, diterpene synthase that catalyzes the formation of (-)-kolavenyl diphosphate from geranylgeranyl diphosphate (GGPP). This chain is (-)-kolavenyl diphosphate synthase TPS28, chloroplastic, found in Tripterygium wilfordii (Thunder God vine).